Consider the following 313-residue polypeptide: Protoheme IX farnesyltransferase (313 aa).

9 helical membrane passes run 35–55, 56–76, 98–118, 120–140, 153–173, 180–200, 226–246, 248–268, and 285–305; these read LVIF…HPVL, AFTS…LNMW, VSKP…VVTL, ILVN…YVVI, IVIG…AAAG, MLLF…LALF, ILLY…LGYF, AIYG…TLRV, and FKFS…EVIV.

Belongs to the UbiA prenyltransferase family. Protoheme IX farnesyltransferase subfamily.

The protein resides in the cell inner membrane. It catalyses the reaction heme b + (2E,6E)-farnesyl diphosphate + H2O = Fe(II)-heme o + diphosphate. The protein operates within porphyrin-containing compound metabolism; heme O biosynthesis; heme O from protoheme: step 1/1. Functionally, converts heme B (protoheme IX) to heme O by substitution of the vinyl group on carbon 2 of heme B porphyrin ring with a hydroxyethyl farnesyl side group. The polypeptide is Protoheme IX farnesyltransferase (Rhodopseudomonas palustris (strain BisB18)).